The chain runs to 432 residues: 3-phosphoshikimate 1-carboxyvinyltransferase (432 aa).

3-phosphoshikimate is bound by residues Lys-23, Ser-24, and Arg-28. A phosphoenolpyruvate-binding site is contributed by Lys-23. Residues Gly-96 and Arg-125 each contribute to the phosphoenolpyruvate site. 3-phosphoshikimate-binding residues include Ser-170, Gln-172, Asp-318, and Lys-345. Residue Gln-172 coordinates phosphoenolpyruvate. Catalysis depends on Asp-318, which acts as the Proton acceptor. 2 residues coordinate phosphoenolpyruvate: Arg-349 and Arg-391.

It belongs to the EPSP synthase family. Monomer.

The protein localises to the cytoplasm. It catalyses the reaction 3-phosphoshikimate + phosphoenolpyruvate = 5-O-(1-carboxyvinyl)-3-phosphoshikimate + phosphate. It functions in the pathway metabolic intermediate biosynthesis; chorismate biosynthesis; chorismate from D-erythrose 4-phosphate and phosphoenolpyruvate: step 6/7. Functionally, catalyzes the transfer of the enolpyruvyl moiety of phosphoenolpyruvate (PEP) to the 5-hydroxyl of shikimate-3-phosphate (S3P) to produce enolpyruvyl shikimate-3-phosphate and inorganic phosphate. In Gloeobacter violaceus (strain ATCC 29082 / PCC 7421), this protein is 3-phosphoshikimate 1-carboxyvinyltransferase.